Here is a 314-residue protein sequence, read N- to C-terminus: Dioxygenase easH (314 aa).

Residues His141, Asp143, and His217 each coordinate Fe cation.

Belongs to the PhyH family. Homodimer. Fe cation serves as cofactor.

The protein operates within alkaloid biosynthesis; ergot alkaloid biosynthesis. Functionally, dioxygenase; part of the gene cluster that mediates the biosynthesis of fungal ergot alkaloid. DmaW catalyzes the first step of ergot alkaloid biosynthesis by condensing dimethylallyl diphosphate (DMAP) and tryptophan to form 4-dimethylallyl-L-tryptophan. The second step is catalyzed by the methyltransferase easF that methylates 4-dimethylallyl-L-tryptophan in the presence of S-adenosyl-L-methionine, resulting in the formation of 4-dimethylallyl-L-abrine. The catalase easC and the FAD-dependent oxidoreductase easE then transform 4-dimethylallyl-L-abrine to chanoclavine-I which is further oxidized by easD in the presence of NAD(+), resulting in the formation of chanoclavine-I aldehyde. Agroclavine dehydrogenase easG then mediates the conversion of chanoclavine-I aldehyde to agroclavine via a non-enzymatic adduct reaction: the substrate is an iminium intermediate that is formed spontaneously from chanoclavine-I aldehyde in the presence of glutathione. The presence of easA is not required to complete this reaction. Further conversion of agroclavine to paspalic acid is a two-step process involving oxidation of agroclavine to elymoclavine and of elymoclavine to paspalic acid, the second step being performed by the elymoclavine oxidase cloA. Paspalic acid is then further converted to D-lysergic acid. Ergopeptines are assembled from D-lysergic acid and three different amino acids by the D-lysergyl-peptide-synthetases composed each of a monomudular and a trimodular nonribosomal peptide synthetase subunit. LpsB and lpsC encode the monomodular subunits responsible for D-lysergic acid activation and incorporation into the ergopeptine backbone. LpsA1 and A2 subunits encode the trimodular nonribosomal peptide synthetase assembling the tripeptide portion of ergopeptines. LpsA1 is responsible for formation of the major ergopeptine, ergotamine, and lpsA2 for alpha-ergocryptine, the minor ergopeptine of the total alkaloid mixture elaborated by C.purpurea. D-lysergyl-tripeptides are assembled by the nonribosomal peptide synthetases and released as N-(D-lysergyl-aminoacyl)-lactams. Cyclolization of the D-lysergyl-tripeptides is performed by the Fe(2+)/2-ketoglutarate-dependent dioxygenase easH which introduces a hydroxyl group into N-(D-lysergyl-aminoacyl)-lactam at alpha-C of the aminoacyl residue followed by spontaneous condensation with the terminal lactam carbonyl group. The chain is Dioxygenase easH from Claviceps purpurea (strain 20.1) (Ergot fungus).